A 291-amino-acid polypeptide reads, in one-letter code: Prolyl 4-hydroxylase 5 (291 aa).

The Cytoplasmic segment spans residues 1–22 (MASKSKQHLRYQPRKSVSRSTQ). A helical; Signal-anchor for type II membrane protein membrane pass occupies residues 23–43 (AFTVLILLLVVILILLGLGIL). At 44–291 (SLPNANRNSS…KWFHVHEFKV (248 aa)) the chain is on the extracellular side. Residue N51 is glycosylated (N-linked (GlcNAc...) asparagine). Positions 163 to 286 (NGEGLQVLHY…KWSSTKWFHV (124 aa)) constitute a Fe2OG dioxygenase domain. Fe cation-binding residues include H181 and D183. N222 carries an N-linked (GlcNAc...) asparagine glycan. H267 is a binding site for Fe cation. A 2-oxoglutarate-binding site is contributed by K277.

This sequence belongs to the P4HA family. Fe(2+) is required as a cofactor. It depends on L-ascorbate as a cofactor. In terms of tissue distribution, expressed in epidermal root hair cells (trichoblasts).

The protein resides in the endoplasmic reticulum membrane. The protein localises to the golgi apparatus membrane. The enzyme catalyses L-prolyl-[collagen] + 2-oxoglutarate + O2 = trans-4-hydroxy-L-prolyl-[collagen] + succinate + CO2. Functionally, catalyzes the post-translational formation of 4-hydroxyproline in -Xaa-Pro-Gly- sequences in proline-rich peptide sequences of plant glycoproteins and other proteins. Hydroxyprolines are important constituent of many plant cell wall glycoproteins such as extensins, hydroxyproline-rich glycoproteins, lectins and arabinogalactan proteins. Possesses high affinity for leucine-rich repeat and proline-rich extensins of root cell walls that are essential for root hair development. Hydroxyprolines define the subsequent O-glycosylation sites by arabinosyltransferases which elongate the O-arabinosides on extensins. In Arabidopsis thaliana (Mouse-ear cress), this protein is Prolyl 4-hydroxylase 5.